A 146-amino-acid chain; its full sequence is Hemoglobin subunit beta-2 (146 aa).

Residues 2–146 (HWTAEEKQLI…VAHALARRYH (145 aa)) form the Globin domain. Residues histidine 63 and histidine 92 each coordinate heme b.

This sequence belongs to the globin family. In terms of assembly, heterotetramer of two alpha chains and two beta chains. As to expression, red blood cells.

Involved in oxygen transport from the lung to the various peripheral tissues. This Iguana iguana (Common iguana) protein is Hemoglobin subunit beta-2.